Here is a 453-residue protein sequence, read N- to C-terminus: 5-hydroxytryptamine receptor 1 (453 aa).

The Extracellular portion of the chain corresponds to 1-36 (MKSLKSSTHDVPHPEHVVWAPPAYDEQHHLFFSHGT). The chain crosses the membrane as a helical span at residues 37 to 57 (VLIGIVGSLIITVAVVGNVLV). The Cytoplasmic portion of the chain corresponds to 58-74 (CLAIFTEPILSHSKSNF). The chain crosses the membrane as a helical span at residues 75-94 (FIVSLAVADLLLALLVMTFA). Topologically, residues 95 to 110 (LVNDMYGYWLFGETFC) are extracellular. Cys-110 and Cys-225 are oxidised to a cystine. Residues 111–133 (FIWMSADVMCETASIFSICVISY) form a helical membrane-spanning segment. The Cytoplasmic portion of the chain corresponds to 134 to 153 (DRLKQVQKPLHYEEFMTTTR). Residues 154-175 (ALLIIACLWICSFVLSFVPIFL) traverse the membrane as a helical segment. Over 176-223 (EWHELSVEEIKAIFKDNKTEKEKALEAHNFSSALNQTLGDNQKSNAKH) the chain is Extracellular. The helical transmembrane segment at 224–244 (VCLFDVHFTYSVIYSFICFYV) threads the bilayer. Topologically, residues 245–301 (PCTLMLTNYLRLFLIAQTHQVRIRSLQMTNPPQLRGQGASSYRNQGTQGSKAARTLT) are cytoplasmic. The chain crosses the membrane as a helical span at residues 302–322 (IITGTFLACWLPFFIINPIAA). The Extracellular portion of the chain corresponds to 323-331 (ADEHLIPLE). The chain crosses the membrane as a helical span at residues 332–352 (CFMVTIWLGYFNSSVNPIIYG). Residues 353-453 (TSNSKFRAAF…VFDSDTAFSS (101 aa)) are Cytoplasmic-facing. Positions 397 to 428 (DLSSSEHPSDACDTGRGKNSKGGDCATADPTK) are disordered. The span at 403 to 412 (HPSDACDTGR) shows a compositional bias: basic and acidic residues.

Belongs to the G-protein coupled receptor 1 family. As to expression, reproductive system.

The protein localises to the cell membrane. In terms of biological role, this is one of the several different receptors for 5-hydroxytryptamine (serotonin). 5-HT plays important roles in various behavioral and physiological processes in aplysia. These include feeding, locomotion, circadian rhythm, learning and memory, synaptic plasticity, and synaptic growth. This receptor is mediated by G proteins that stimulate phospholipase C. This chain is 5-hydroxytryptamine receptor 1 (5HTB1), found in Aplysia californica (California sea hare).